The following is a 323-amino-acid chain: Protoheme IX farnesyltransferase (323 aa).

8 helical membrane-spanning segments follow: residues 28–48 (IIPL…EGRV), 50–70 (LFTL…AQVM), 101–121 (FIFA…FVNL), 122–142 (LSGL…THLL), 150–170 (IVIG…AVTG), 178–198 (ILFA…ALMI), 235–255 (FLLV…AIIL), and 282–302 (FSIF…LPLT).

Belongs to the UbiA prenyltransferase family. Protoheme IX farnesyltransferase subfamily.

The protein localises to the cell inner membrane. It carries out the reaction heme b + (2E,6E)-farnesyl diphosphate + H2O = Fe(II)-heme o + diphosphate. The protein operates within porphyrin-containing compound metabolism; heme O biosynthesis; heme O from protoheme: step 1/1. Converts heme B (protoheme IX) to heme O by substitution of the vinyl group on carbon 2 of heme B porphyrin ring with a hydroxyethyl farnesyl side group. The polypeptide is Protoheme IX farnesyltransferase (Rippkaea orientalis (strain PCC 8801 / RF-1) (Cyanothece sp. (strain PCC 8801))).